A 405-amino-acid polypeptide reads, in one-letter code: Deoxyguanosinetriphosphate triphosphohydrolase-like protein (405 aa).

The region spanning Arg75–Asn219 is the HD domain.

This sequence belongs to the dGTPase family. Type 2 subfamily.

In Agrobacterium fabrum (strain C58 / ATCC 33970) (Agrobacterium tumefaciens (strain C58)), this protein is Deoxyguanosinetriphosphate triphosphohydrolase-like protein.